Reading from the N-terminus, the 406-residue chain is Acetylornithine/succinyldiaminopimelate aminotransferase (406 aa).

Pyridoxal 5'-phosphate-binding positions include Gly-108 to Thr-109 and Phe-141. Arg-144 is a binding site for N(2)-acetyl-L-ornithine. Pyridoxal 5'-phosphate is bound at residue Asp-226–Gln-229. An N6-(pyridoxal phosphate)lysine modification is found at Lys-255. Ser-283 is a binding site for N(2)-acetyl-L-ornithine. Thr-284 lines the pyridoxal 5'-phosphate pocket.

This sequence belongs to the class-III pyridoxal-phosphate-dependent aminotransferase family. ArgD subfamily. As to quaternary structure, homodimer. Pyridoxal 5'-phosphate serves as cofactor.

Its subcellular location is the cytoplasm. The catalysed reaction is N(2)-acetyl-L-ornithine + 2-oxoglutarate = N-acetyl-L-glutamate 5-semialdehyde + L-glutamate. It carries out the reaction N-succinyl-(2S,6S)-2,6-diaminopimelate + 2-oxoglutarate = (S)-2-succinylamino-6-oxoheptanedioate + L-glutamate. Its pathway is amino-acid biosynthesis; L-arginine biosynthesis; N(2)-acetyl-L-ornithine from L-glutamate: step 4/4. It functions in the pathway amino-acid biosynthesis; L-lysine biosynthesis via DAP pathway; LL-2,6-diaminopimelate from (S)-tetrahydrodipicolinate (succinylase route): step 2/3. In terms of biological role, involved in both the arginine and lysine biosynthetic pathways. This chain is Acetylornithine/succinyldiaminopimelate aminotransferase, found in Escherichia coli O157:H7.